A 435-amino-acid chain; its full sequence is 3-phosphoshikimate 1-carboxyvinyltransferase (435 aa).

Positions 21, 22, and 26 each coordinate 3-phosphoshikimate. A phosphoenolpyruvate-binding site is contributed by K21. G98 and R126 together coordinate phosphoenolpyruvate. 3-phosphoshikimate contacts are provided by S169, S170, Q171, S197, D312, and K339. Q171 contacts phosphoenolpyruvate. Residue D312 is the Proton acceptor of the active site. Residues R343, R386, and K412 each contribute to the phosphoenolpyruvate site.

It belongs to the EPSP synthase family. In terms of assembly, monomer.

The protein localises to the cytoplasm. The catalysed reaction is 3-phosphoshikimate + phosphoenolpyruvate = 5-O-(1-carboxyvinyl)-3-phosphoshikimate + phosphate. Its pathway is metabolic intermediate biosynthesis; chorismate biosynthesis; chorismate from D-erythrose 4-phosphate and phosphoenolpyruvate: step 6/7. Functionally, catalyzes the transfer of the enolpyruvyl moiety of phosphoenolpyruvate (PEP) to the 5-hydroxyl of shikimate-3-phosphate (S3P) to produce enolpyruvyl shikimate-3-phosphate and inorganic phosphate. This chain is 3-phosphoshikimate 1-carboxyvinyltransferase, found in Clostridium beijerinckii (strain ATCC 51743 / NCIMB 8052) (Clostridium acetobutylicum).